Consider the following 238-residue polypeptide: Ribonuclease PH (238 aa).

Residues R86 and G124–R126 each bind phosphate.

The protein belongs to the RNase PH family. Homohexameric ring arranged as a trimer of dimers.

The enzyme catalyses tRNA(n+1) + phosphate = tRNA(n) + a ribonucleoside 5'-diphosphate. Phosphorolytic 3'-5' exoribonuclease that plays an important role in tRNA 3'-end maturation. Removes nucleotide residues following the 3'-CCA terminus of tRNAs; can also add nucleotides to the ends of RNA molecules by using nucleoside diphosphates as substrates, but this may not be physiologically important. Probably plays a role in initiation of 16S rRNA degradation (leading to ribosome degradation) during starvation. The protein is Ribonuclease PH of Phenylobacterium zucineum (strain HLK1).